Reading from the N-terminus, the 239-residue chain is Ribosomal RNA small subunit methyltransferase G (239 aa).

Residues Gly77, Phe82, 128–129 (AE), and Arg147 each bind S-adenosyl-L-methionine.

It belongs to the methyltransferase superfamily. RNA methyltransferase RsmG family.

The protein resides in the cytoplasm. In terms of biological role, specifically methylates the N7 position of guanine in position 535 of 16S rRNA. The polypeptide is Ribosomal RNA small subunit methyltransferase G (Bacillus cereus (strain ZK / E33L)).